A 338-amino-acid polypeptide reads, in one-letter code: Large ribosomal subunit protein uL10 (338 aa).

A disordered region spans residues 303–338 (VEVSAAPAAEEEKEEEKKEEEKKEEDTGAAGLALLF). The span at 317-328 (EEKKEEEKKEED) shows a compositional bias: basic and acidic residues.

It belongs to the universal ribosomal protein uL10 family. In terms of assembly, part of the 50S ribosomal subunit. Forms part of the ribosomal stalk which helps the ribosome interact with GTP-bound translation factors. Forms a heptameric L10(L12)2(L12)2(L12)2 complex, where L10 forms an elongated spine to which the L12 dimers bind in a sequential fashion.

Its function is as follows. Forms part of the ribosomal stalk, playing a central role in the interaction of the ribosome with GTP-bound translation factors. In Methanocaldococcus jannaschii (strain ATCC 43067 / DSM 2661 / JAL-1 / JCM 10045 / NBRC 100440) (Methanococcus jannaschii), this protein is Large ribosomal subunit protein uL10.